We begin with the raw amino-acid sequence, 558 residues long: Ubiquitin carboxyl-terminal hydrolase 30 homolog (558 aa).

Residues 6–26 form a helical membrane-spanning segment; that stretch reads ILMAAGVTVAAVVGAFVFWGP. The 512-residue stretch at 39–550 folds into the USP domain; sequence AGLHNFGLTC…PAYLLFYDRG (512 aa). The active-site Nucleophile is the C48. A disordered region spans residues 267–300; it reads LATPMLGGERSSRPRLPQSQQQQDEGLNRRVSSS. Residues 280–289 are compositionally biased toward low complexity; the sequence is PRLPQSQQQQ. The active-site Proton acceptor is the H506.

Belongs to the peptidase C19 family.

The protein resides in the mitochondrion outer membrane. The enzyme catalyses Thiol-dependent hydrolysis of ester, thioester, amide, peptide and isopeptide bonds formed by the C-terminal Gly of ubiquitin (a 76-residue protein attached to proteins as an intracellular targeting signal).. In terms of biological role, deubiquitinating enzyme that acts as a key inhibitor of mitophagy by counteracting the action of parkin (park). The sequence is that of Ubiquitin carboxyl-terminal hydrolase 30 homolog from Drosophila melanogaster (Fruit fly).